Reading from the N-terminus, the 227-residue chain is DNA repair protein RecO (227 aa).

Belongs to the RecO family.

In terms of biological role, involved in DNA repair and RecF pathway recombination. This Pseudomonas putida (strain ATCC 47054 / DSM 6125 / CFBP 8728 / NCIMB 11950 / KT2440) protein is DNA repair protein RecO.